The primary structure comprises 139 residues: Large ribosomal subunit protein uL16 (139 aa).

A compositionally biased stretch (basic residues) spans 1–16 (MLIPKRTKYRKQHRPD). The tract at residues 1–23 (MLIPKRTKYRKQHRPDRHGMSKG) is disordered.

It belongs to the universal ribosomal protein uL16 family. In terms of assembly, part of the 50S ribosomal subunit.

Its function is as follows. Binds 23S rRNA and is also seen to make contacts with the A and possibly P site tRNAs. The protein is Large ribosomal subunit protein uL16 of Bifidobacterium animalis subsp. lactis (strain AD011).